A 221-amino-acid chain; its full sequence is MTKTADLKGSNFTLSVLHLPNDDVALALNMLEQKVAQAPSFFASAPVVVNIENVSNEINFVELKSGVERTGMIPVGITGCKDKEKQAQATAAGFAIMTSFTPQQVTQKANMQPTKVIKTPIRSGQQIYAKDADLVILNHVSPGAEVIADGSIHIHGTLRGRAIAGASGQAEAKVFCKNLQAELISIAGNYWLSDQIDKEYWHQNVMITMVEDRIQIDTLTL.

The protein belongs to the MinC family. As to quaternary structure, interacts with MinD and FtsZ.

Functionally, cell division inhibitor that blocks the formation of polar Z ring septums. Rapidly oscillates between the poles of the cell to destabilize FtsZ filaments that have formed before they mature into polar Z rings. Prevents FtsZ polymerization. This is Probable septum site-determining protein MinC from Aliivibrio fischeri (strain MJ11) (Vibrio fischeri).